The chain runs to 261 residues: Ribosomal RNA small subunit methyltransferase J (261 aa).

S-adenosyl-L-methionine contacts are provided by residues 109–110, 125–126, and D179; these read RD and ER.

Belongs to the methyltransferase superfamily. RsmJ family.

Its subcellular location is the cytoplasm. The catalysed reaction is guanosine(1516) in 16S rRNA + S-adenosyl-L-methionine = N(2)-methylguanosine(1516) in 16S rRNA + S-adenosyl-L-homocysteine + H(+). Functionally, specifically methylates the guanosine in position 1516 of 16S rRNA. The polypeptide is Ribosomal RNA small subunit methyltransferase J (Pseudomonas aeruginosa (strain LESB58)).